The sequence spans 359 residues: Histamine H2 receptor (359 aa).

The Extracellular portion of the chain corresponds to 1–22; it reads MISNGTGSSFCLDSPPCRITVS. Residue N4 is glycosylated (N-linked (GlcNAc...) asparagine). Residues 23–44 traverse the membrane as a helical segment; it reads VVLTVLILITIAGNVVVCLAVG. Topologically, residues 45-57 are cytoplasmic; sequence LNRRLRSLTNCFI. Residues 58 to 81 form a helical membrane-spanning segment; the sequence is VSLAITDLLLGLLVLPFSAFYQLS. At 82 to 92 the chain is on the extracellular side; sequence CRWSFGKVFCN. C91 and C174 are disulfide-bonded. A helical membrane pass occupies residues 93 to 114; the sequence is IYTSLDVMLCTASILNLFMISL. Residues 115 to 134 lie on the Cytoplasmic side of the membrane; it reads DRYCAVTDPLRYPVLITPVR. Residues 135–159 traverse the membrane as a helical segment; sequence VAVSLVLIWVISITLSFLSIHLGWN. The Extracellular portion of the chain corresponds to 160-180; that stretch reads SRNETSSFNHTIPKCKVQVNL. The chain crosses the membrane as a helical span at residues 181–204; sequence VYGLVDGLVTFYLPLLVMCITYYR. At 205-234 the chain is on the cytoplasmic side; the sequence is IFKIARDQAKRIHHMGSWKAATIGEHKATV. Residues 235–258 traverse the membrane as a helical segment; that stretch reads TLAAVMGAFIICWFPYFTVFVYRG. Topologically, residues 259–267 are extracellular; sequence LKGDDAINE. A helical transmembrane segment spans residues 268–289; it reads AFEAVVLWLGYANSALNPILYA. At 290–359 the chain is on the cytoplasmic side; it reads TLNRDFRTAY…VTAPRGATDR (70 aa). A lipid anchor (S-palmitoyl cysteine) is attached at C305. The span at 310-327 shows a compositional bias: polar residues; that stretch reads HNAQETSLRSNSSQLARN. The disordered stretch occupies residues 310-359; sequence HNAQETSLRSNSSQLARNQSREPMRQEEKPLKLQVWSGTEVTAPRGATDR. A compositionally biased stretch (basic and acidic residues) spans 328–340; it reads QSREPMRQEEKPL.

The protein belongs to the G-protein coupled receptor 1 family. In terms of tissue distribution, gastric fundus and, to a lesser extent, in brain.

It localises to the cell membrane. In terms of biological role, the H2 subclass of histamine receptors mediates gastric acid secretion. The activity of this receptor is mediated by G proteins which activate adenylyl cyclase. This Canis lupus familiaris (Dog) protein is Histamine H2 receptor (HRH2).